Consider the following 172-residue polypeptide: Large ribosomal subunit protein bL17m (172 aa).

The N-terminal 8 residues, 1–8, are a transit peptide targeting the mitochondrion; that stretch reads MRLSFAAA.

This sequence belongs to the bacterial ribosomal protein bL17 family. As to quaternary structure, component of the mitochondrial ribosome large subunit (39S) which comprises a 16S rRNA and about 50 distinct proteins.

Its subcellular location is the mitochondrion. The protein is Large ribosomal subunit protein bL17m (MRPL17) of Bos taurus (Bovine).